Consider the following 621-residue polypeptide: E3 SUMO-protein ligase PIAS2 (621 aa).

Residues 11-45 (VSSFRVSELQVLLGFAGRNKSGRKHDLLMRALHLL) form the SAP domain. The short motif at 19-23 (LQVLL) is the LXXLL motif element. Glycyl lysine isopeptide (Lys-Gly) (interchain with G-Cter in SUMO2) cross-links involve residues K46 and K249. Residues 134–299 (QPSPPIPPVH…SMSVYLVRQL (166 aa)) enclose the PINIT domain. An SP-RING-type zinc finger spans residues 331 to 412 (PDSEIATTSL…FMEILNDCSD (82 aa)). Zn(2+) is bound by residues C362, H364, C385, and C388. Glycyl lysine isopeptide (Lys-Gly) (interchain with G-Cter in SUMO2) cross-links involve residues K430, K435, K443, and K452. The SUMO1-binding stretch occupies residues 467 to 473 (VDVIDLT). Residues S476, S477, and S478 each carry the phosphoserine modification. Residues 484–492 (PPAKRKCIF) carry the Nuclear localization signal motif. A Glycyl lysine isopeptide (Lys-Gly) (interchain with G-Cter in SUMO2) cross-link involves residue K489. S499 is subject to Phosphoserine. Glycyl lysine isopeptide (Lys-Gly) (interchain with G-Cter in SUMO2) cross-links involve residues K502 and Q562. Positions 579 to 610 (SSTSVTTTSSHESSTHVSSSSSRSETGVITSS) are enriched in low complexity. The tract at residues 579 to 621 (SSTSVTTTSSHESSTHVSSSSSRSETGVITSSGSNIPDIISLD) is disordered.

This sequence belongs to the PIAS family. Binds SUMO1 and UBE2I. Interacts with AXIN1, JUN, MDM2, PARK7, TP53 and TP73 isoform alpha, but not TP73 isoform beta. Interacts with STAT4 following IL12 and IFN-alpha stimulation of T-cells. Interacts also with GTF2I, GTF2IRD1, IKFZ1, DAB2 and MSX2, as well as with several steroid receptors, including ESR1, ESR2, NR3C1, PGR, AR, and with NCOA2. Sumoylation of a target protein seems to enhance the interaction. Binds to sumoylated ELK1. Binds DNA, such as CDKN1A promoter, in a sequence-specific manner. Interacts with PLAG1. Interacts with KLF8; the interaction results in SUMO ligation and repression of KLF8 transcriptional activity and of its cell cycle progression into G(1) phase. PIAS2-beta interacts with IFIH1/MDA5. Isoform PIAS2-alpha interacts with PML (isoform PML-12). Interacts with PRDM1/Blimp-1. Post-translationally, sumoylated. Mainly expressed in testis. Isoform 3 is expressed predominantly in adult testis, weakly in pancreas, embryonic testis and sperm, and at very low levels in other organs.

The protein localises to the nucleus speckle. The protein resides in the nucleus. It localises to the PML body. Its pathway is protein modification; protein sumoylation. Its function is as follows. Functions as an E3-type small ubiquitin-like modifier (SUMO) ligase, stabilizing the interaction between UBE2I and the substrate, and as a SUMO-tethering factor. Plays a crucial role as a transcriptional coregulator in various cellular pathways, including the STAT pathway, the p53 pathway and the steroid hormone signaling pathway. The effects of this transcriptional coregulation, transactivation or silencing may vary depending upon the biological context and the PIAS2 isoform studied. However, it seems to be mostly involved in gene silencing. Binds to sumoylated ELK1 and enhances its transcriptional activity by preventing recruitment of HDAC2 by ELK1, thus reversing SUMO-mediated repression of ELK1 transactivation activity. Isoform PIAS2-beta, but not isoform PIAS2-alpha, promotes MDM2 sumoylation. Isoform PIAS2-alpha promotes PARK7 sumoylation. Isoform PIAS2-beta promotes NCOA2 sumoylation more efficiently than isoform PIAS2-alpha. Isoform PIAS2-alpha sumoylates PML at'Lys-65' and 'Lys-160'. The protein is E3 SUMO-protein ligase PIAS2 (PIAS2) of Homo sapiens (Human).